Consider the following 134-residue polypeptide: S-protein homolog 31 (134 aa).

The signal sequence occupies residues 1-21 (MKILSVFLFVFSIYIFGHVSG). Asn-87 is a glycosylation site (N-linked (GlcNAc...) asparagine).

The protein belongs to the plant self-incompatibility (S1) protein family.

The protein resides in the secreted. The protein is S-protein homolog 31 of Arabidopsis thaliana (Mouse-ear cress).